Consider the following 100-residue polypeptide: Urease subunit gamma (100 aa).

Belongs to the urease gamma subunit family. Heterotrimer of UreA (gamma), UreB (beta) and UreC (alpha) subunits. Three heterotrimers associate to form the active enzyme.

The protein resides in the cytoplasm. It catalyses the reaction urea + 2 H2O + H(+) = hydrogencarbonate + 2 NH4(+). Its pathway is nitrogen metabolism; urea degradation; CO(2) and NH(3) from urea (urease route): step 1/1. The polypeptide is Urease subunit gamma (Burkholderia multivorans (strain ATCC 17616 / 249)).